The following is a 317-amino-acid chain: tRNA(Met) cytidine acetate ligase (317 aa).

Residues Ile6–Gln19, Gly100, Asn157, and Arg182 each bind ATP.

The protein belongs to the TmcAL family.

The protein localises to the cytoplasm. The catalysed reaction is cytidine(34) in elongator tRNA(Met) + acetate + ATP = N(4)-acetylcytidine(34) in elongator tRNA(Met) + AMP + diphosphate. Functionally, catalyzes the formation of N(4)-acetylcytidine (ac(4)C) at the wobble position of elongator tRNA(Met), using acetate and ATP as substrates. First activates an acetate ion to form acetyladenylate (Ac-AMP) and then transfers the acetyl group to tRNA to form ac(4)C34. This chain is tRNA(Met) cytidine acetate ligase, found in Mesomycoplasma hyopneumoniae (strain 232) (Mycoplasma hyopneumoniae).